A 678-amino-acid chain; its full sequence is Auxin response factor 7 (678 aa).

The TF-B3 DNA-binding region spans Phe128–Met230. Disordered stretches follow at residues Ala360 to Ala386 and Gly502 to Val547. A PB1 domain is found at Arg548–Lys641. The disordered stretch occupies residues Pro643–Cys678.

The protein belongs to the ARF family. In terms of assembly, homodimers and heterodimers. In terms of tissue distribution, expressed in roots, culms, leaves and young panicles.

The protein localises to the nucleus. Its function is as follows. Auxin response factors (ARFs) are transcriptional factors that bind specifically to the DNA sequence 5'-TGTCTC-3' found in the auxin-responsive promoter elements (AuxREs). The protein is Auxin response factor 7 (ARF7) of Oryza sativa subsp. japonica (Rice).